The primary structure comprises 238 residues: Small ribosomal subunit protein eS4 (238 aa).

The S4 RNA-binding domain maps to 38–101 (LPLALIIRDV…GEVYRVVPDA (64 aa)).

The protein belongs to the eukaryotic ribosomal protein eS4 family.

The chain is Small ribosomal subunit protein eS4 from Pyrobaculum aerophilum (strain ATCC 51768 / DSM 7523 / JCM 9630 / CIP 104966 / NBRC 100827 / IM2).